An 85-amino-acid chain; its full sequence is Small ribosomal subunit protein uS17 (85 aa).

The protein belongs to the universal ribosomal protein uS17 family. As to quaternary structure, part of the 30S ribosomal subunit.

Its function is as follows. One of the primary rRNA binding proteins, it binds specifically to the 5'-end of 16S ribosomal RNA. The sequence is that of Small ribosomal subunit protein uS17 from Ruminiclostridium cellulolyticum (strain ATCC 35319 / DSM 5812 / JCM 6584 / H10) (Clostridium cellulolyticum).